Reading from the N-terminus, the 147-residue chain is Large ribosomal subunit protein bL9 (147 aa).

This sequence belongs to the bacterial ribosomal protein bL9 family.

Functionally, binds to the 23S rRNA. This Helicobacter hepaticus (strain ATCC 51449 / 3B1) protein is Large ribosomal subunit protein bL9.